Consider the following 252-residue polypeptide: 5-oxoprolinase subunit A (252 aa).

This sequence belongs to the LamB/PxpA family. Forms a complex composed of PxpA, PxpB and PxpC.

It catalyses the reaction 5-oxo-L-proline + ATP + 2 H2O = L-glutamate + ADP + phosphate + H(+). Catalyzes the cleavage of 5-oxoproline to form L-glutamate coupled to the hydrolysis of ATP to ADP and inorganic phosphate. This chain is 5-oxoprolinase subunit A, found in Kocuria rhizophila (strain ATCC 9341 / DSM 348 / NBRC 103217 / DC2201).